The chain runs to 751 residues: Probable alpha-galactosidase C (751 aa).

The first 27 residues, 1-27 (MFGSPKRAALAAASLLAIFGNGPSVMA), serve as a signal peptide directing secretion. Asparagine 49, asparagine 57, asparagine 162, asparagine 186, asparagine 194, asparagine 366, asparagine 433, asparagine 452, and asparagine 500 each carry an N-linked (GlcNAc...) asparagine glycan. Aspartate 510 serves as the catalytic Nucleophile. Catalysis depends on aspartate 572, which acts as the Proton donor. Residue asparagine 720 is glycosylated (N-linked (GlcNAc...) asparagine).

The protein belongs to the glycosyl hydrolase 36 family. In terms of assembly, homotetramer. Mg(2+) serves as cofactor. NAD(+) is required as a cofactor.

It is found in the secreted. It catalyses the reaction Hydrolysis of terminal, non-reducing alpha-D-galactose residues in alpha-D-galactosides, including galactose oligosaccharides, galactomannans and galactolipids.. Functionally, hydrolyzes a variety of simple alpha-D-galactoside as well as more complex molecules such as oligosaccharides and polysaccharides. In Aspergillus flavus (strain ATCC 200026 / FGSC A1120 / IAM 13836 / NRRL 3357 / JCM 12722 / SRRC 167), this protein is Probable alpha-galactosidase C (aglC).